A 280-amino-acid chain; its full sequence is Putative S-adenosyl-L-methionine-dependent methyltransferase FRAAL3836 (280 aa).

S-adenosyl-L-methionine contacts are provided by residues aspartate 121 and 150–151; that span reads DL.

The protein belongs to the UPF0677 family.

Functionally, exhibits S-adenosyl-L-methionine-dependent methyltransferase activity. This is Putative S-adenosyl-L-methionine-dependent methyltransferase FRAAL3836 from Frankia alni (strain DSM 45986 / CECT 9034 / ACN14a).